A 115-amino-acid chain; its full sequence is Large ribosomal subunit protein bL20c (115 aa).

Belongs to the bacterial ribosomal protein bL20 family.

It is found in the plastid. It localises to the chloroplast. Functionally, binds directly to 23S ribosomal RNA and is necessary for the in vitro assembly process of the 50S ribosomal subunit. It is not involved in the protein synthesizing functions of that subunit. The chain is Large ribosomal subunit protein bL20c from Pyropia yezoensis (Susabi-nori).